Here is a 333-residue protein sequence, read N- to C-terminus: Tetraacyldisaccharide 4'-kinase (333 aa).

ATP is bound at residue 55 to 62; sequence TAGGNGKT.

Belongs to the LpxK family.

It catalyses the reaction a lipid A disaccharide + ATP = a lipid IVA + ADP + H(+). It participates in glycolipid biosynthesis; lipid IV(A) biosynthesis; lipid IV(A) from (3R)-3-hydroxytetradecanoyl-[acyl-carrier-protein] and UDP-N-acetyl-alpha-D-glucosamine: step 6/6. Functionally, transfers the gamma-phosphate of ATP to the 4'-position of a tetraacyldisaccharide 1-phosphate intermediate (termed DS-1-P) to form tetraacyldisaccharide 1,4'-bis-phosphate (lipid IVA). In Pectobacterium carotovorum subsp. carotovorum (strain PC1), this protein is Tetraacyldisaccharide 4'-kinase.